The chain runs to 375 residues: MNTPVNLLDFDVDGLVDWFAGLGEKPFRARQVMRWMHREGCDDFDQMTDVAKSLRAKLKEIAVIRPPVPVRDSVSSDGTRKWLLDVGNANAVETVFIPETNRGTLCVSSQAGCALDCAFCSTGKQGFNRNLTAAEIIGQLWLANKLLGAARDAAADLEAGEKDNGRIISNVVMMGMGEPLANFDNVVTALRLMLDDHAYGLSRRRVTVSTSGIVPAIDRLRDECPVALAVSLHASNDALRDRLVPINQKYPLRELMAACQRYLERAPRDFITFEYVMLDGVNDQEAHARELIALVRDVPCKFNLIPFNPFPNSGFQRSNAERIRRFAGILLDAGIVTTTRKTRGDDVDAACGQLAGQVQDKTRRTVRLKQSMEVR.

Residue Glu93 is the Proton acceptor of the active site. In terms of domain architecture, Radical SAM core spans Glu99 to Asp346. An intrachain disulfide couples Cys106 to Cys351. Residues Cys113, Cys117, and Cys120 each contribute to the [4Fe-4S] cluster site. S-adenosyl-L-methionine contacts are provided by residues Gly177–Glu178, Ser209, Ser231–His233, and Asn308. The S-methylcysteine intermediate role is filled by Cys351.

Belongs to the radical SAM superfamily. RlmN family. The cofactor is [4Fe-4S] cluster.

Its subcellular location is the cytoplasm. The catalysed reaction is adenosine(2503) in 23S rRNA + 2 reduced [2Fe-2S]-[ferredoxin] + 2 S-adenosyl-L-methionine = 2-methyladenosine(2503) in 23S rRNA + 5'-deoxyadenosine + L-methionine + 2 oxidized [2Fe-2S]-[ferredoxin] + S-adenosyl-L-homocysteine. It catalyses the reaction adenosine(37) in tRNA + 2 reduced [2Fe-2S]-[ferredoxin] + 2 S-adenosyl-L-methionine = 2-methyladenosine(37) in tRNA + 5'-deoxyadenosine + L-methionine + 2 oxidized [2Fe-2S]-[ferredoxin] + S-adenosyl-L-homocysteine. Its function is as follows. Specifically methylates position 2 of adenine 2503 in 23S rRNA and position 2 of adenine 37 in tRNAs. m2A2503 modification seems to play a crucial role in the proofreading step occurring at the peptidyl transferase center and thus would serve to optimize ribosomal fidelity. This chain is Dual-specificity RNA methyltransferase RlmN, found in Azoarcus sp. (strain BH72).